Here is a 456-residue protein sequence, read N- to C-terminus: UPF0496 protein 4 (456 aa).

Residues Ser205–Ser221 traverse the membrane as a helical segment.

It belongs to the ROH1 family.

The protein localises to the membrane. This chain is UPF0496 protein 4, found in Oryza sativa subsp. indica (Rice).